The primary structure comprises 199 residues: ATP-dependent Clp protease proteolytic subunit (199 aa).

The Nucleophile role is filled by serine 99. The active site involves histidine 124.

This sequence belongs to the peptidase S14 family. In terms of assembly, fourteen ClpP subunits assemble into 2 heptameric rings which stack back to back to give a disk-like structure with a central cavity, resembling the structure of eukaryotic proteasomes.

Its subcellular location is the cytoplasm. The enzyme catalyses Hydrolysis of proteins to small peptides in the presence of ATP and magnesium. alpha-casein is the usual test substrate. In the absence of ATP, only oligopeptides shorter than five residues are hydrolyzed (such as succinyl-Leu-Tyr-|-NHMec, and Leu-Tyr-Leu-|-Tyr-Trp, in which cleavage of the -Tyr-|-Leu- and -Tyr-|-Trp bonds also occurs).. In terms of biological role, cleaves peptides in various proteins in a process that requires ATP hydrolysis. Has a chymotrypsin-like activity. Plays a major role in the degradation of misfolded proteins. This is ATP-dependent Clp protease proteolytic subunit from Lactococcus lactis subsp. lactis (strain IL1403) (Streptococcus lactis).